Here is a 176-residue protein sequence, read N- to C-terminus: Vitamin K epoxide reductase complex subunit 1-like protein 1 (176 aa).

Over Met-1–Arg-13 the chain is Cytoplasmic. A helical membrane pass occupies residues Trp-14–Val-36. Over Glu-37–Asn-87 the chain is Lumenal. Cys-50 and Cys-58 are oxidised to a cystine. Residue Asn-87 coordinates (S)-warfarin. The chain crosses the membrane as a helical span at residues Ser-88–Gly-102. Residues Met-103 to Ala-107 lie on the Cytoplasmic side of the membrane. Residues Val-108–Leu-135 traverse the membrane as a helical segment. Over Lys-136–Phe-138 the chain is Lumenal. Cys-139 and Cys-142 form a disulfide bridge. Residues Cys-139–Leu-160 form a helical membrane-spanning segment. 2 residues coordinate phylloquinone: Cys-142 and Tyr-146. Tyr-146 is a binding site for (S)-warfarin. Topologically, residues Val-161–Asp-176 are cytoplasmic.

This sequence belongs to the VKOR family.

The protein resides in the endoplasmic reticulum membrane. It catalyses the reaction phylloquinone + [protein]-disulfide + H2O = 2,3-epoxyphylloquinone + [protein]-dithiol. It carries out the reaction phylloquinol + [protein]-disulfide = phylloquinone + [protein]-dithiol. Inhibited by warfarin (coumadin). Warfarin locks VKORC1 in both redox states into the closed conformation. Involved in vitamin K metabolism. Can reduce inactive vitamin K 2,3-epoxide to active vitamin K, and may contribute to vitamin K-mediated protection against oxidative stress. Plays a role in vitamin K-dependent gamma-carboxylation of Glu residues in target proteins. The sequence is that of Vitamin K epoxide reductase complex subunit 1-like protein 1 (VKORC1L1) from Homo sapiens (Human).